The sequence spans 244 residues: uncharacterized protein (244 aa).

This is an uncharacterized protein from Sulfolobus spindle-shape virus 1 (SSV1).